A 120-amino-acid chain; its full sequence is Small ribosomal subunit protein uS10 (120 aa).

Phosphoserine is present on residues Ser16 and Ser18.

Belongs to the universal ribosomal protein uS10 family. Expressed ubiquitously in embryos, highest expression is in the midgut.

This is Small ribosomal subunit protein uS10 (RpS20) from Drosophila melanogaster (Fruit fly).